The sequence spans 170 residues: Protein-lysine myristoyltransferase HlyC (170 aa).

Residues His-23 and Asp-92 contribute to the active site. His-151 lines the heme pocket.

It belongs to the RTX toxin acyltransferase family. In terms of assembly, monomer. Post-translationally, proteolytically cleaved by the protease systems ClpAP, ClpXP and FtsH, leading to its degradation.

It is found in the cytoplasm. The enzyme catalyses tetradecanoyl-[ACP] + L-lysyl-[protein] = N(6)-tetradecanoyl-L-lysyl-[protein] + holo-[ACP] + H(+). The acyltransferase activity is inhibited by heme. In terms of biological role, protein-lysine myristoyltransferase that catalyzes myristoylation of the protoxin (HlyA) at two internal lysine residues, thereby converting it to the active toxin. This is Protein-lysine myristoyltransferase HlyC from Escherichia coli.